Here is a 689-residue protein sequence, read N- to C-terminus: DNA ligase (689 aa).

NAD(+)-binding positions include Asp-40 to Asp-44, Ser-89 to Leu-90, and Glu-122. Lys-124 acts as the N6-AMP-lysine intermediate in catalysis. Residues Arg-145, Glu-182, Lys-300, and Lys-325 each coordinate NAD(+). Positions 419, 422, 437, and 442 each coordinate Zn(2+). One can recognise a BRCT domain in the interval Gln-600 to Ala-689.

Belongs to the NAD-dependent DNA ligase family. LigA subfamily. It depends on Mg(2+) as a cofactor. Mn(2+) is required as a cofactor.

The enzyme catalyses NAD(+) + (deoxyribonucleotide)n-3'-hydroxyl + 5'-phospho-(deoxyribonucleotide)m = (deoxyribonucleotide)n+m + AMP + beta-nicotinamide D-nucleotide.. In terms of biological role, DNA ligase that catalyzes the formation of phosphodiester linkages between 5'-phosphoryl and 3'-hydroxyl groups in double-stranded DNA using NAD as a coenzyme and as the energy source for the reaction. It is essential for DNA replication and repair of damaged DNA. The sequence is that of DNA ligase from Gemmatimonas aurantiaca (strain DSM 14586 / JCM 11422 / NBRC 100505 / T-27).